Consider the following 295-residue polypeptide: Indole-3-glycerol phosphate synthase (295 aa).

The protein belongs to the TrpC family.

It carries out the reaction 1-(2-carboxyphenylamino)-1-deoxy-D-ribulose 5-phosphate + H(+) = (1S,2R)-1-C-(indol-3-yl)glycerol 3-phosphate + CO2 + H2O. It functions in the pathway amino-acid biosynthesis; L-tryptophan biosynthesis; L-tryptophan from chorismate: step 4/5. The protein is Indole-3-glycerol phosphate synthase of Prochlorococcus marinus (strain AS9601).